The following is a 174-amino-acid chain: Adenylate kinase (174 aa).

The interval 12–41 (STGDMLRAAIKAGTPLGLEAKKIIDEGGLV) is NMP. AMP contacts are provided by residues threonine 13, arginine 18, 39–41 (GLV), 67–70 (GFPR), and glutamine 74. Positions 104 to 141 (GRRVHLASGRTYHVTYNPPKVEGKDDVTGEDLIQRDDD) are LID. ATP is bound by residues arginine 105 and 114-115 (TY). AMP contacts are provided by arginine 138 and arginine 149.

It belongs to the adenylate kinase family. In terms of assembly, monomer.

It localises to the cytoplasm. The catalysed reaction is AMP + ATP = 2 ADP. Its pathway is purine metabolism; AMP biosynthesis via salvage pathway; AMP from ADP: step 1/1. In terms of biological role, catalyzes the reversible transfer of the terminal phosphate group between ATP and AMP. Plays an important role in cellular energy homeostasis and in adenine nucleotide metabolism. This is Adenylate kinase from Neisseria lactamica.